We begin with the raw amino-acid sequence, 574 residues long: Amino-acid acetyltransferase, mitochondrial (574 aa).

Residues 1 to 13 (MWRRIFAHELKYD) constitute a mitochondrion transit peptide. Residues 392–560 (KGAKPSSNSP…KRLREFMRSV (169 aa)) form the N-acetyltransferase domain.

Belongs to the acetyltransferase family. In terms of assembly, interacts with the acetylglutamate kinase chain of AGR5,6.

The protein resides in the mitochondrion. The catalysed reaction is L-glutamate + acetyl-CoA = N-acetyl-L-glutamate + CoA + H(+). It participates in amino-acid biosynthesis; L-arginine biosynthesis; N(2)-acetyl-L-ornithine from L-glutamate: step 1/4. Feedback inhibition by L-arginine. N-acetylglutamate synthase involved in arginine biosynthesis. In Saccharomyces cerevisiae (strain RM11-1a) (Baker's yeast), this protein is Amino-acid acetyltransferase, mitochondrial (ARG2).